Here is a 284-residue protein sequence, read N- to C-terminus: Tropomyosin (284 aa).

2 disordered regions span residues Met-1–Gln-27 and Tyr-99–Glu-131. Positions Met-1–Asp-273 form a coiled coil. The segment covering Ser-102–Glu-131 has biased composition (basic and acidic residues).

This sequence belongs to the tropomyosin family. Homodimer.

Functionally, tropomyosin, in association with the troponin complex, plays a central role in the calcium dependent regulation of muscle contraction. The chain is Tropomyosin from Mimachlamys nobilis (Noble scallop).